The chain runs to 579 residues: Zinc metalloproteinase nas-11 (579 aa).

The signal sequence occupies residues Met-1–Gly-17. The propeptide occupies Gln-18–Lys-328. The interval Trp-35 to Pro-58 is disordered. An N-linked (GlcNAc...) asparagine glycan is attached at Asn-256. Over residues Gly-293–Ser-312 the composition is skewed to acidic residues. The tract at residues Gly-293–Ser-323 is disordered. The Peptidase M12A domain maps to Ser-329–Gln-536. Intrachain disulfides connect Cys-375/Cys-535, Cys-401/Cys-421, Cys-539/Cys-575, Cys-546/Cys-568, and Cys-555/Cys-572. His-430 serves as a coordination point for Zn(2+). The active site involves Glu-431. 2 residues coordinate Zn(2+): His-434 and His-440. An N-linked (GlcNAc...) asparagine glycan is attached at Asn-454. A ShKT domain is found at Cys-539–Cys-575.

The cofactor is Zn(2+). In terms of tissue distribution, expressed in the anterior part of the intestine, CEP neurons and to a lesser extent in hypodermis.

It is found in the secreted. Functionally, metalloprotease. The protein is Zinc metalloproteinase nas-11 (nas-11) of Caenorhabditis elegans.